The sequence spans 538 residues: Probable bifunctional riboflavin biosynthesis protein RIBA 1, chloroplastic (538 aa).

Positions 1 to 16 (MSRLSSIYSQHRTSGL) are enriched in polar residues. The interval 1–29 (MSRLSSIYSQHRTSGLRSDRSIMPNSTSN) is disordered. The transit peptide at 1-73 (MSRLSSIYSQ…NGQASPSKVV (73 aa)) directs the protein to the chloroplast. The segment at 46-311 (RNFHISHAVG…IADLIRYRRK (266 aa)) is DHBP synthase. D-ribulose 5-phosphate-binding positions include 134–135 (RE), Asp-139, 249–253 (RAGHT), and Glu-273. Glu-135 is a binding site for Mg(2+). His-252 contributes to the Mg(2+) binding site. Positions 312–530 (RDRLVERVCV…DGGIKKEQDQ (219 aa)) are GTP cyclohydrolase II. 362–366 (RVHSE) is a binding site for GTP. Residues Cys-367, Cys-378, and Cys-380 each coordinate Zn(2+). Residues Gln-383, 406-408 (EGR), and Thr-428 contribute to the GTP site. Asp-440 functions as the Proton acceptor; for GTP cyclohydrolase activity in the catalytic mechanism. Arg-442 acts as the Nucleophile; for GTP cyclohydrolase activity in catalysis. GTP is bound by residues Thr-463 and Lys-468. The disordered stretch occupies residues 506–538 (HVYGTRPSGNTSTLADGGIKKEQDQIDSASEQE).

It in the N-terminal section; belongs to the DHBP synthase family. The protein in the C-terminal section; belongs to the GTP cyclohydrolase II family. Mg(2+) serves as cofactor. Mn(2+) is required as a cofactor. The cofactor is Zn(2+).

The protein resides in the plastid. Its subcellular location is the chloroplast. The enzyme catalyses D-ribulose 5-phosphate = (2S)-2-hydroxy-3-oxobutyl phosphate + formate + H(+). It catalyses the reaction GTP + 4 H2O = 2,5-diamino-6-hydroxy-4-(5-phosphoribosylamino)-pyrimidine + formate + 2 phosphate + 3 H(+). The protein operates within cofactor biosynthesis; riboflavin biosynthesis; 2-hydroxy-3-oxobutyl phosphate from D-ribulose 5-phosphate: step 1/1. It functions in the pathway cofactor biosynthesis; riboflavin biosynthesis; 5-amino-6-(D-ribitylamino)uracil from GTP: step 1/4. Involved in riboflavin biosynthesis. Catalyzes both the conversion of D-ribulose 5-phosphate to formate and 3,4-dihydroxy-2-butanone 4-phosphate and the conversion of GTP to 2,5-diamino-6-ribosylamino-4(3H)-pyrimidinone 5'-phosphate (DARP), formate and pyrophosphate. The chain is Probable bifunctional riboflavin biosynthesis protein RIBA 1, chloroplastic (RIBA1) from Oryza sativa subsp. japonica (Rice).